A 316-amino-acid polypeptide reads, in one-letter code: Protoheme IX farnesyltransferase (316 aa).

9 helical membrane-spanning segments follow: residues 28–48 (WLAL…AAGM), 57–77 (IPIG…AGAI), 106–126 (AALV…WLAT), 129–149 (LAAD…TMWL), 156–176 (NIVI…AATM), 179–199 (MAVL…PHFW), 230–250 (ILIY…VHEV), 254–274 (YTVV…RVLM), and 296–316 (YSLV…VLIG).

The protein belongs to the UbiA prenyltransferase family. Protoheme IX farnesyltransferase subfamily.

Its subcellular location is the cell inner membrane. The enzyme catalyses heme b + (2E,6E)-farnesyl diphosphate + H2O = Fe(II)-heme o + diphosphate. It participates in porphyrin-containing compound metabolism; heme O biosynthesis; heme O from protoheme: step 1/1. Its function is as follows. Converts heme B (protoheme IX) to heme O by substitution of the vinyl group on carbon 2 of heme B porphyrin ring with a hydroxyethyl farnesyl side group. The polypeptide is Protoheme IX farnesyltransferase (Gluconobacter oxydans (strain 621H) (Gluconobacter suboxydans)).